A 462-amino-acid chain; its full sequence is Chitinase-like mite allergen Der p 18.0101 (462 aa).

The N-terminal stretch at 1-25 (MTRLSFTVLIFLAAYFGSNIRPNVA) is a signal peptide. One can recognise a GH18 domain in the interval 29-378 (PKTVCYYESW…HAINSNYFRG (350 aa)). Cys-33 and Cys-58 form a disulfide bridge. N-linked (GlcNAc...) asparagine glycosylation is found at Asn-338 and Asn-441. Positions 404–462 (VFHCHQEGFFRDKTYCAKYYECKKGDFGLEQTVHHCPNHSQAFDEVSRTCVDHAKIPGC) constitute a Chitin-binding type-2 domain. Cys-439 and Cys-453 are oxidised to a cystine.

This sequence belongs to the glycosyl hydrolase 18 family. Chitinase class II subfamily. Expressed in the peritrophic matrix of the midgut, and only very weakly in fecal pellets.

It localises to the secreted. Its function is as follows. Probably a non-catalytic chitinase-like protein, which binds to insoluble chitin and enhances the activity of the catalytic chitinases. Has weak chitin-binding activity. The sequence is that of Chitinase-like mite allergen Der p 18.0101 from Dermatophagoides pteronyssinus (European house dust mite).